Here is a 433-residue protein sequence, read N- to C-terminus: Adenosylhomocysteinase A (433 aa).

Residues Thr57, Asp132, Glu157, Lys187, and Asp191 each contribute to the substrate site. The interval Ser184–Ala351 is NAD binding.

It belongs to the adenosylhomocysteinase family. In terms of assembly, homotetramer. Requires NAD(+) as cofactor.

The protein resides in the cytoplasm. The enzyme catalyses S-adenosyl-L-homocysteine + H2O = L-homocysteine + adenosine. Its pathway is amino-acid biosynthesis; L-homocysteine biosynthesis; L-homocysteine from S-adenosyl-L-homocysteine: step 1/1. Functionally, catalyzes the hydrolysis of S-adenosyl-L-homocysteine to form adenosine and homocysteine. Binds copper ions. The sequence is that of Adenosylhomocysteinase A (ahcy-a) from Xenopus laevis (African clawed frog).